Reading from the N-terminus, the 363-residue chain is Mannose-1-phosphate guanyltransferase (363 aa).

The protein belongs to the transferase hexapeptide repeat family.

It is found in the cytoplasm. It catalyses the reaction alpha-D-mannose 1-phosphate + GTP + H(+) = GDP-alpha-D-mannose + diphosphate. Its pathway is nucleotide-sugar biosynthesis; GDP-alpha-D-mannose biosynthesis; GDP-alpha-D-mannose from alpha-D-mannose 1-phosphate (GTP route): step 1/1. Its function is as follows. Involved in cell wall synthesis where it is required for glycosylation. Involved in cell cycle progression through cell-size checkpoint. Required for the correct assembly of the septum. The chain is Mannose-1-phosphate guanyltransferase (mpg1) from Schizosaccharomyces pombe (strain 972 / ATCC 24843) (Fission yeast).